The chain runs to 392 residues: Alaserpin (392 aa).

The signal sequence occupies residues 1 to 16 (MKIIMCIFGLAALAMA). The N-linked (GlcNAc...) asparagine glycan is linked to N85.

Belongs to the serpin family. As to expression, hemolymph.

The protein resides in the secreted. It localises to the extracellular space. Its function is as follows. Inhibits elastase. This chain is Alaserpin, found in Manduca sexta (Tobacco hawkmoth).